The primary structure comprises 523 residues: MLNVPSQSFPAPSSQQRVAAIGRSKVPLKPGRSLMDWIRLTKSGKDLTGLKGRLIDVTEEELAQHNKKEDCWICIRGMVYNITPYMEYHPGGEEELMKAAGRDGTDLFDQVHRWVNYESMLKECLIGRMAIKHVSISKEVTSVENKMNKHLNGSVASSKMSRTSSKESHPWYDWFQTESLVTVAVYTKMKNVCSELVIVDHLENVLRGEIIIGDYSYLLHSELSHPVQKDIEVKVSATAGKIEIKMKKKEPVSWKSLGQPMDGHNSFLKHSQRGLYYRKCRLASKTDINYNTKLFCVQLPQGCHLQVPVGHHIYLKMNISGVDIVKPYTPVASCLLPDAQYSTFCNKQCLYLMIKIYPNGSITPHLENLTVGDYISISNPQGTFSSFQIENVMDVFLVAAGTGITPMIRLLQHVLTCVSSLRKAKLIFFNKKEEDILWKEQVEELSLADKRFEAQLILSEPSVKWTGYRGQISYSLLNESILRTEEGSKILICICGPNAFVDQGISFLQDLGFSKEEVFAFRE.

A Cytochrome b5 heme-binding domain is found at 54-130 (LIDVTEEELA…LKECLIGRMA (77 aa)). His89 and His112 together coordinate heme. Residues 167–258 (ESHPWYDWFQ…KEPVSWKSLG (92 aa)) enclose the CS domain. Residues 275 to 387 (LYYRKCRLAS…SNPQGTFSSF (113 aa)) form the FAD-binding FR-type domain. Residues 367-382 (ENLT…NPQG) and 394-426 (DVFL…KAKL) each bind FAD.

This sequence belongs to the flavoprotein pyridine nucleotide cytochrome reductase family. FAD is required as a cofactor.

The protein resides in the endoplasmic reticulum. It carries out the reaction 2 Fe(III)-[cytochrome b5] + NADH = 2 Fe(II)-[cytochrome b5] + NAD(+) + H(+). Its function is as follows. NADH-cytochrome b5 reductase involved in endoplasmic reticulum stress response pathway. In Xenopus tropicalis (Western clawed frog), this protein is Cytochrome b5 reductase 4 (cyb5r4).